The following is a 597-amino-acid chain: Cell division cycle protein 23 homolog (597 aa).

A2 is subject to N-acetylalanine. 3 TPR repeats span residues 27–63 (SDLREIKKQLLLIAGLTRERGLLHSSKWSAELAFSLP), 73–112 (PPPITEEDAQDMDAYTLAKAYFDVKEYDRAAHFLHGCNSK), and 114–144 (AYFLYMYSRYLSGEKKKDDETVDSLGPLEKG). A Glycyl lysine isopeptide (Lys-Gly) (interchain with G-Cter in SUMO2) cross-link involves residue K147. TPR repeat units follow at residues 169 to 200 (GFGLYLYGVVLRKLDLVKEAIDVFVEATHVLP), 229 to 259 (MKEFFLAHIYTELQLIEEALQKYQNLIDVGF), 263 to 293 (SYIVSQIAVAYHNIRDIDKALSIFNELRKQD), 297 to 327 (IENMDTFSNLLYVRSMKSELSYLAHNLCEID), 331 to 361 (VETCCVIGNYYSLRSQHEKAALYFQRALKLN), 366 to 395 (GAWTLMGHEYMEMKNTSAAIQAYRHAIEVN), 400 to 432 (RAWYGLGQTYEILKMPFYCLYYYRRAHQLRPND), and 433 to 466 (SRMLVALGECYEKLNQLVEAKKCYWRAYAVGDVE). The residue at position 273 (Y273) is a Phosphotyrosine. The residue at position 467 (K467) is an N6-acetyllysine. 2 TPR repeats span residues 468 to 500 (MALVKLAKLHEQLTESEQAAQCYIKYIQDIYSC) and 504 to 540 (VEHLEESTAFRYLAQYYFKCKLWDEASTCAQKCCAFN). Phosphothreonine is present on residues T562 and T565. Phosphoserine is present on S578. T582 bears the Phosphothreonine mark. Phosphoserine occurs at positions 588 and 593. The residue at position 596 (T596) is a Phosphothreonine.

It belongs to the APC8/CDC23 family. The mammalian APC/C is composed at least of 14 distinct subunits ANAPC1, ANAPC2, CDC27/APC3, ANAPC4, ANAPC5, CDC16/APC6, ANAPC7, CDC23/APC8, ANAPC10, ANAPC11, CDC26/APC12, ANAPC13, ANAPC15 and ANAPC16 that assemble into a complex of at least 19 chains with a combined molecular mass of around 1.2 MDa; APC/C interacts with FZR1 and FBXO5. Interacts with FBXO43; the interaction is direct. Phosphorylated. Phosphorylation on Thr-562 occurs specifically during mitosis.

It functions in the pathway protein modification; protein ubiquitination. Component of the anaphase promoting complex/cyclosome (APC/C), a cell cycle-regulated E3 ubiquitin ligase that controls progression through mitosis and the G1 phase of the cell cycle. The APC/C complex acts by mediating ubiquitination and subsequent degradation of target proteins: it mainly mediates the formation of 'Lys-11'-linked polyubiquitin chains and, to a lower extent, the formation of 'Lys-48'- and 'Lys-63'-linked polyubiquitin chains. The APC/C complex catalyzes assembly of branched 'Lys-11'-/'Lys-48'-linked branched ubiquitin chains on target proteins. The protein is Cell division cycle protein 23 homolog (CDC23) of Homo sapiens (Human).